The sequence spans 294 residues: Cell division protein FtsQ (294 aa).

Over 1–26 (MARGPNRRRVDRVPGERRRRLARAMA) the chain is Cytoplasmic. A helical membrane pass occupies residues 27–49 (LALPSILALAALGGAATLGWRVG). Residues 50-294 (WKSDLLRVRE…GPQGRSSSLR (245 aa)) lie on the Periplasmic side of the membrane. Positions 55 to 123 (LRVREIRFEG…PALEVQLAER (69 aa)) constitute a POTRA domain. Positions 266 to 294 (AGRRGEPDGRSSYAAGGGGGPQGRSSSLR) are disordered.

The protein belongs to the FtsQ/DivIB family. FtsQ subfamily.

It is found in the cell inner membrane. In terms of biological role, essential cell division protein. This is Cell division protein FtsQ from Anaeromyxobacter sp. (strain K).